The primary structure comprises 324 residues: Methyltransferase pytC (324 aa).

The segment at 1-28 (MTVRTAAEPPNRIEVDMDAPSLDTDSSC) is disordered.

This sequence belongs to the methyltransferase superfamily. LaeA methyltransferase family.

The protein operates within secondary metabolite biosynthesis. In terms of biological role, methyltransferase; part of the gene cluster that mediates the biosynthesis of pyranterreones, a family of antioxidative compounds. The first step of pyranonigrins biosynthesis is performed by the hybrid PKS-NRPS synthetase pytA that condenses 4 malonyl-CoA units ato the acetyl starter unit by the modular PKS of pytA. The acyl chain is then connected to an L-serine through the amide bond by the modular NRPS of pytA. A tetramic acid is formed and released from the PKS-NRPS pytA to give pyranterreone 5 with the help of the thioesterase pytI. Pyranterreone 5 could be methylated by pytC to afford pyranterreone 6. Both pyranterreones 5 and 6 are subsequently oxidized by the FAD-linked oxidoreductase pytB and the cytochrome P450 monooxygenase pytD to form the fused gamma-pyrone core, resulting in pyranterreones 7 and 11, respectively. The hydroxy group at C-8 of pyranterreones 7 and 11 are dehydrated by the aspartyl protease pytH to form a delta-7 double bond to give pyranterreones 3 and 1, 2 accordingly. The exo-methylene of pyranterreone 3 could be reduced into a pendant methyl by reductase pytE to provide pyranterreone 4, also known as cordylactam. Pyranterreone 4 can be reconverted to pyranterreone 3 through pytB-catalyzed dehydrogenation or further oxidized to pyranterreones 9 and 10. In Aspergillus terreus, this protein is Methyltransferase pytC.